The primary structure comprises 79 residues: Acyl carrier protein (79 aa).

The Carrier domain maps to 2-77 (ENIEQRVKKI…QAIDYVTAHL (76 aa)). The residue at position 37 (serine 37) is an O-(pantetheine 4'-phosphoryl)serine.

Belongs to the acyl carrier protein (ACP) family. 4'-phosphopantetheine is transferred from CoA to a specific serine of apo-ACP by AcpS. This modification is essential for activity because fatty acids are bound in thioester linkage to the sulfhydryl of the prosthetic group.

It is found in the cytoplasm. It functions in the pathway lipid metabolism; fatty acid biosynthesis. Carrier of the growing fatty acid chain in fatty acid biosynthesis. This chain is Acyl carrier protein, found in Aromatoleum aromaticum (strain DSM 19018 / LMG 30748 / EbN1) (Azoarcus sp. (strain EbN1)).